The sequence spans 327 residues: Serpentine receptor class gamma-2 (327 aa).

The next 6 helical transmembrane spans lie at leucine 35–leucine 55, isoleucine 70–alanine 90, methionine 157–isoleucine 177, leucine 181–threonine 203, isoleucine 244–alanine 264, and phenylalanine 277–alanine 297.

Belongs to the nematode receptor-like protein srg family.

The protein localises to the membrane. This Caenorhabditis elegans protein is Serpentine receptor class gamma-2 (srg-2).